Consider the following 221-residue polypeptide: MRYNNYDNSGSSFLTRVVKKSDMEKTLLLNREIDDWKSNDKKKAYKERGRVYASCSFIEVSFSQIRAVDVEKKIENAEQLRDLTRNIVKNKTSSLNEITPSKNRVTSACNSERRTTSQEANNLEGYHSCAQGTSRSASITKKYSKKTTSRPKREKRQTILPNGEIKECSKCKDTWTIQWRSGPDQNRELCSPCGLAYGKRLKKENEKKRQAADKRIDRNNP.

The span at 101–110 shows a compositional bias: polar residues; sequence SKNRVTSACN. Disordered regions lie at residues 101–121 and 137–161; these read SKNRVTSACNSERRTTSQEAN and ASITKKYSKKTTSRPKREKRQTILP. The span at 142–155 shows a compositional bias: basic residues; sequence KYSKKTTSRPKREK. A GATA-type zinc finger spans residues 168–193; that stretch reads CSKCKDTWTIQWRSGPDQNRELCSPC. Residues 201–221 are disordered; the sequence is LKKENEKKRQAADKRIDRNNP. A compositionally biased stretch (basic and acidic residues) spans 203–221; it reads KENEKKRQAADKRIDRNNP.

It localises to the cytoplasm. Its subcellular location is the nucleus. In terms of biological role, plays a direct or indirect role in pre-rRNA processing. This chain is Pre-rRNA-processing protein SRD1 (SRD1), found in Saccharomyces cerevisiae (strain ATCC 204508 / S288c) (Baker's yeast).